Consider the following 501-residue polypeptide: Glutamyl-tRNA(Gln) amidotransferase subunit A (501 aa).

Active-site charge relay system residues include K80 and S155. S179 (acyl-ester intermediate) is an active-site residue.

Belongs to the amidase family. GatA subfamily. Heterotrimer of A, B and C subunits.

The catalysed reaction is L-glutamyl-tRNA(Gln) + L-glutamine + ATP + H2O = L-glutaminyl-tRNA(Gln) + L-glutamate + ADP + phosphate + H(+). Functionally, allows the formation of correctly charged Gln-tRNA(Gln) through the transamidation of misacylated Glu-tRNA(Gln) in organisms which lack glutaminyl-tRNA synthetase. The reaction takes place in the presence of glutamine and ATP through an activated gamma-phospho-Glu-tRNA(Gln). This Cupriavidus pinatubonensis (strain JMP 134 / LMG 1197) (Cupriavidus necator (strain JMP 134)) protein is Glutamyl-tRNA(Gln) amidotransferase subunit A.